Consider the following 212-residue polypeptide: Synaptosomal-associated protein 25 (212 aa).

T-SNARE coiled-coil homology domains follow at residues 26-88 (QGVA…LSGM) and 148-210 (DARE…AHQL).

The protein belongs to the SNAP-25 family. Exclusively found in brain and ganglia.

It localises to the synapse. The protein localises to the synaptosome. In terms of biological role, may play an important role in the synaptic function of specific neuronal systems. Associates with proteins involved in vesicle docking and membrane fusion. This chain is Synaptosomal-associated protein 25 (Snap25), found in Drosophila melanogaster (Fruit fly).